Reading from the N-terminus, the 194-residue chain is MISRLTGKLVEKNPPQIVIDVNGVGYEADVSMQTFYNLPPVGESVQLFTQLIIREDAHLLFGFATAEERKTFRQLIKVSGIGAKTALGILSAMTADELAQAVAEEDVKRLSSAPGIGKKTAERMVLELRGKLVAHAVTDGLFAAAPAADETEDIVGTLLALGYSEREAKAAVKGVPKGTDVGEGVRLALKNLLK.

The segment at 1–64 (MISRLTGKLV…EDAHLLFGFA (64 aa)) is domain I. The domain II stretch occupies residues 65–143 (TAEERKTFRQ…AHAVTDGLFA (79 aa)). The tract at residues 144-147 (AAPA) is flexible linker. The domain III stretch occupies residues 147–194 (AADETEDIVGTLLALGYSEREAKAAVKGVPKGTDVGEGVRLALKNLLK).

The protein belongs to the RuvA family. As to quaternary structure, homotetramer. Forms an RuvA(8)-RuvB(12)-Holliday junction (HJ) complex. HJ DNA is sandwiched between 2 RuvA tetramers; dsDNA enters through RuvA and exits via RuvB. An RuvB hexamer assembles on each DNA strand where it exits the tetramer. Each RuvB hexamer is contacted by two RuvA subunits (via domain III) on 2 adjacent RuvB subunits; this complex drives branch migration. In the full resolvosome a probable DNA-RuvA(4)-RuvB(12)-RuvC(2) complex forms which resolves the HJ.

It localises to the cytoplasm. Functionally, the RuvA-RuvB-RuvC complex processes Holliday junction (HJ) DNA during genetic recombination and DNA repair, while the RuvA-RuvB complex plays an important role in the rescue of blocked DNA replication forks via replication fork reversal (RFR). RuvA specifically binds to HJ cruciform DNA, conferring on it an open structure. The RuvB hexamer acts as an ATP-dependent pump, pulling dsDNA into and through the RuvAB complex. HJ branch migration allows RuvC to scan DNA until it finds its consensus sequence, where it cleaves and resolves the cruciform DNA. This is Holliday junction branch migration complex subunit RuvA from Neisseria meningitidis serogroup C / serotype 2a (strain ATCC 700532 / DSM 15464 / FAM18).